The following is a 965-amino-acid chain: Valine--tRNA ligase (965 aa).

Polar residues predominate over residues 1–12; the sequence is MEKTPATQTQAE. The segment at 1 to 23 is disordered; the sequence is MEKTPATQTQAEPSLDKTYNPKE. A 'HIGH' region motif is present at residues 56–66; that stretch reads PNVTGSLHMGH. The short motif at 568–572 is the 'KMSKS' region element; that stretch reads KMSKS. ATP is bound at residue Lys571. Positions 893 to 960 form a coiled coil; it reads MAGLVDKEAE…SKEKLLAQKE (68 aa).

Belongs to the class-I aminoacyl-tRNA synthetase family. ValS type 1 subfamily. As to quaternary structure, monomer.

The protein resides in the cytoplasm. It catalyses the reaction tRNA(Val) + L-valine + ATP = L-valyl-tRNA(Val) + AMP + diphosphate. Functionally, catalyzes the attachment of valine to tRNA(Val). As ValRS can inadvertently accommodate and process structurally similar amino acids such as threonine, to avoid such errors, it has a 'posttransfer' editing activity that hydrolyzes mischarged Thr-tRNA(Val) in a tRNA-dependent manner. This is Valine--tRNA ligase from Photorhabdus laumondii subsp. laumondii (strain DSM 15139 / CIP 105565 / TT01) (Photorhabdus luminescens subsp. laumondii).